The chain runs to 248 residues: Ribonuclease 3 (248 aa).

The region spanning 6-136 is the RNase III domain; that stretch reads LAYLQTLIGS…LIGAIYLDKG (131 aa). E49 lines the Mg(2+) pocket. The active site involves D53. Positions 122 and 125 each coordinate Mg(2+). E125 is a catalytic residue. Residues 163–231 form the DRBM domain; sequence NYKSCLIEYS…AKEAMERIIA (69 aa).

The protein belongs to the ribonuclease III family. In terms of assembly, homodimer. The cofactor is Mg(2+).

It is found in the cytoplasm. The catalysed reaction is Endonucleolytic cleavage to 5'-phosphomonoester.. Functionally, digests double-stranded RNA. Involved in the processing of primary rRNA transcript to yield the immediate precursors to the large and small rRNAs (23S and 16S). Processes some mRNAs, and tRNAs when they are encoded in the rRNA operon. Processes pre-crRNA and tracrRNA of type II CRISPR loci if present in the organism. The sequence is that of Ribonuclease 3 from Chlorobium chlorochromatii (strain CaD3).